Consider the following 455-residue polypeptide: Kynurenine 3-monooxygenase (455 aa).

This sequence belongs to the aromatic-ring hydroxylase family. KMO subfamily. It depends on FAD as a cofactor.

The enzyme catalyses L-kynurenine + NADPH + O2 + H(+) = 3-hydroxy-L-kynurenine + NADP(+) + H2O. Its pathway is cofactor biosynthesis; NAD(+) biosynthesis; quinolinate from L-kynurenine: step 1/3. Its function is as follows. Catalyzes the hydroxylation of L-kynurenine (L-Kyn) to form 3-hydroxy-L-kynurenine (L-3OHKyn). Required for synthesis of quinolinic acid. The polypeptide is Kynurenine 3-monooxygenase (Xanthomonas euvesicatoria pv. vesicatoria (strain 85-10) (Xanthomonas campestris pv. vesicatoria)).